A 258-amino-acid chain; its full sequence is Undecaprenyl-diphosphatase (258 aa).

8 helical membrane passes run 14–34 (AAGE…PWLL), 39–59 (QGLT…LIYF), 79–99 (GKIL…GVLF), 106–126 (VFRS…ILHL), 136–156 (VALN…ALMP), 176–196 (AESA…AAVL), 209–229 (AFIA…KFLM), and 237–257 (FNIF…TALM).

It belongs to the UppP family.

Its subcellular location is the cell membrane. It catalyses the reaction di-trans,octa-cis-undecaprenyl diphosphate + H2O = di-trans,octa-cis-undecaprenyl phosphate + phosphate + H(+). Its function is as follows. Catalyzes the dephosphorylation of undecaprenyl diphosphate (UPP). Confers resistance to bacitracin. This chain is Undecaprenyl-diphosphatase, found in Elusimicrobium minutum (strain Pei191).